We begin with the raw amino-acid sequence, 145 residues long: Ribosomal RNA large subunit methyltransferase H (145 aa).

S-adenosyl-L-methionine-binding positions include Leu-68, Gly-95, and 113 to 118; that span reads FSKMTF.

This sequence belongs to the RNA methyltransferase RlmH family. In terms of assembly, homodimer.

The protein resides in the cytoplasm. It carries out the reaction pseudouridine(1915) in 23S rRNA + S-adenosyl-L-methionine = N(3)-methylpseudouridine(1915) in 23S rRNA + S-adenosyl-L-homocysteine + H(+). Its function is as follows. Specifically methylates the pseudouridine at position 1915 (m3Psi1915) in 23S rRNA. The polypeptide is Ribosomal RNA large subunit methyltransferase H (Mycoplasmopsis pulmonis (strain UAB CTIP) (Mycoplasma pulmonis)).